Reading from the N-terminus, the 415-residue chain is Alpha-2Db adrenergic receptor (415 aa).

Residues 1-33 (MDLSTITFLLPNSSEDTNGTSAPRLPPHSQCAS) lie on the Extracellular side of the membrane. Residues N12 and N18 are each glycosylated (N-linked (GlcNAc...) asparagine). The helical transmembrane segment at 34–58 (VLIVLVVTVIILVTIVGNVLVVVAV) threads the bilayer. Residues 59 to 70 (FTSRALRAPQNL) lie on the Cytoplasmic side of the membrane. A helical membrane pass occupies residues 71–96 (FLVSLAAADILVATLVIPFSLANEVM). Residues 97–106 (GYWYLGSTWC) lie on the Extracellular side of the membrane. A disulfide bridge connects residues C106 and C179. A helical membrane pass occupies residues 107–129 (AFYLALDVLFCTSSIVHLCAISL). At 130–150 (DRYWSVTKAVSYNLKRTPRRI) the chain is on the cytoplasmic side. A helical membrane pass occupies residues 151–173 (KIMITVVWVISAVISFPPLLMTK). The Extracellular portion of the chain corresponds to 174–184 (HDELECLLNNE). A glycan (N-linked (GlcNAc...) asparagine) is linked at N183. The chain crosses the membrane as a helical span at residues 185–208 (TWYILSSCIVSFFAPGLIMILVYC). Topologically, residues 209 to 339 (RIYRVAKQRA…QMREKRFTFV (131 aa)) are cytoplasmic. The interval 234-299 (QSETCFVRKG…EGAQSCPKPN (66 aa)) is disordered. Residues 276–286 (NRHRNSRFAKS) show a composition bias toward basic residues. Residues 340–363 (LAVVMGVFVLCWFPFFFTYSLHAI) form a helical membrane-spanning segment. Over 364 to 376 (CRKSCTIPDSLFN) the chain is Extracellular. Residues 377-397 (LFFWIGYCNSSVNPIIYTIFN) traverse the membrane as a helical segment. The Cytoplasmic segment spans residues 398–415 (RDFRKAFKKIMCRHSTRT).

Belongs to the G-protein coupled receptor 1 family. Adrenergic receptor subfamily. ADRA2D sub-subfamily.

Its subcellular location is the cell membrane. Functionally, alpha-2 adrenergic receptors mediate the catecholamine-induced inhibition of adenylate cyclase through the action of G proteins. The order of potency for this receptor is dexmedetomidine &gt; norepinephrine = epinephrine &gt; oxymetazoline. The chain is Alpha-2Db adrenergic receptor (adra2db) from Danio rerio (Zebrafish).